The sequence spans 180 residues: MFPMVTGFMNYGQQTVRAARYIGQSFMITLSHANRLPVTIQYPYEKSITSERFRGRIHFEFDKCIACEVCVRVCPIDLPVVHWRLETDIRKKRLLNYSIDFGICIFCGNCVEYCPTNCLSMTEEYELSAYNRHELNYNQIALGRLPMSVIEDYTIRTTRNSTQIKIAMDKPLNARTVTNF.

4Fe-4S ferredoxin-type domains lie at Gly-55–Arg-84 and Leu-95–Glu-124. Residues Cys-64, Cys-67, Cys-70, Cys-74, Cys-104, Cys-107, Cys-110, and Cys-114 each contribute to the [4Fe-4S] cluster site.

It belongs to the complex I 23 kDa subunit family. As to quaternary structure, NDH is composed of at least 16 different subunits, 5 of which are encoded in the nucleus. [4Fe-4S] cluster serves as cofactor.

The protein resides in the plastid. Its subcellular location is the chloroplast thylakoid membrane. The enzyme catalyses a plastoquinone + NADH + (n+1) H(+)(in) = a plastoquinol + NAD(+) + n H(+)(out). It catalyses the reaction a plastoquinone + NADPH + (n+1) H(+)(in) = a plastoquinol + NADP(+) + n H(+)(out). Functionally, NDH shuttles electrons from NAD(P)H:plastoquinone, via FMN and iron-sulfur (Fe-S) centers, to quinones in the photosynthetic chain and possibly in a chloroplast respiratory chain. The immediate electron acceptor for the enzyme in this species is believed to be plastoquinone. Couples the redox reaction to proton translocation, and thus conserves the redox energy in a proton gradient. The polypeptide is NAD(P)H-quinone oxidoreductase subunit I, chloroplastic (Calycanthus floridus var. glaucus (Eastern sweetshrub)).